A 237-amino-acid chain; its full sequence is Undecaprenyl-diphosphatase (237 aa).

7 helical membrane passes run 38-58, 65-85, 92-112, 126-146, 166-186, 191-211, and 217-237; these read QTAVLHLGTLVSVVLFALDGI, WRIILNLIVSTIPAGVFGVLF, LFSSPRFLPLFFSATALILMF, MSFLDALLVGIAQLFALFPGI, ALQYSFLMSIPVVLGAGILGL, VTILAPIFAFLSGLFALYVLS, and GKIWQFSYYCLFVAILSYLAG.

Belongs to the UppP family.

It is found in the cell inner membrane. It carries out the reaction di-trans,octa-cis-undecaprenyl diphosphate + H2O = di-trans,octa-cis-undecaprenyl phosphate + phosphate + H(+). Catalyzes the dephosphorylation of undecaprenyl diphosphate (UPP). Confers resistance to bacitracin. The sequence is that of Undecaprenyl-diphosphatase from Thermotoga maritima (strain ATCC 43589 / DSM 3109 / JCM 10099 / NBRC 100826 / MSB8).